A 388-amino-acid chain; its full sequence is Mannitol-1-phosphate 5-dehydrogenase (388 aa).

NAD(+) is bound at residue 5–16 (AVHFGGGNIGRG). K213 is an active-site residue.

It belongs to the mannitol dehydrogenase family. Monomer.

It catalyses the reaction D-mannitol 1-phosphate + NAD(+) = beta-D-fructose 6-phosphate + NADH + H(+). Functionally, catalyzes the NAD(H)-dependent interconversion of D-fructose 6-phosphate and D-mannitol 1-phosphate in the mannitol metabolic pathway. In Coccidioides immitis (strain RS) (Valley fever fungus), this protein is Mannitol-1-phosphate 5-dehydrogenase.